Here is a 241-residue protein sequence, read N- to C-terminus: MIIIPAIDLFDNCAVRLFKGNYKEKKIYSSEPWKLAEGFAKNGATLLHLVDLNGARNQLGINEDSILKIRKTTSLKVQLGGGIRDKEKLAYYDKIGIDRFILGTAAVTDPDLLKFALDNYGKERVVVAVDAIDGIVKIAGWEKDSGVRYRDLMDRLAKAGIEHIVFTDIAQDGTLAGPNLKAYQEILNSYPFQVIASGGISSLKDLMDLSSLKTKIPLYGVITGKALYEGKLDLAKAISSI.

The Proton acceptor role is filled by aspartate 8. Catalysis depends on aspartate 130, which acts as the Proton donor.

The protein belongs to the HisA/HisF family.

The protein localises to the cytoplasm. The enzyme catalyses 1-(5-phospho-beta-D-ribosyl)-5-[(5-phospho-beta-D-ribosylamino)methylideneamino]imidazole-4-carboxamide = 5-[(5-phospho-1-deoxy-D-ribulos-1-ylimino)methylamino]-1-(5-phospho-beta-D-ribosyl)imidazole-4-carboxamide. The protein operates within amino-acid biosynthesis; L-histidine biosynthesis; L-histidine from 5-phospho-alpha-D-ribose 1-diphosphate: step 4/9. The chain is 1-(5-phosphoribosyl)-5-[(5-phosphoribosylamino)methylideneamino] imidazole-4-carboxamide isomerase from Leptospira borgpetersenii serovar Hardjo-bovis (strain JB197).